Reading from the N-terminus, the 323-residue chain is Aquaporin-4 (323 aa).

Over 1 to 36 the chain is Cytoplasmic; sequence MSDRPTARRWGKCGPLCTRENIMVAFKGVWTQAFWK. S-palmitoyl cysteine attachment occurs at residues Cys-13 and Cys-17. The helical transmembrane segment at 37 to 57 threads the bilayer; it reads AVTAEFLAMLIFVLLSLGSTI. The Extracellular segment spans residues 58–69; sequence NWGGTEKPLPVD. A helical transmembrane segment spans residues 70–89; sequence MVLISLCFGLSIATMVQCFG. Topologically, residues 90–93 are cytoplasmic; that stretch reads HISG. The segment at residues 94 to 101 is an intramembrane region (discontinuously helical); it reads GHINPAVT. An NPA 1 motif is present at residues 97–99; it reads NPA. Residues 102 to 115 are Cytoplasmic-facing; the sequence is VAMVCTRKISIAKS. Phosphoserine; by PKG is present on Ser-111. A helical transmembrane segment spans residues 116-136; sequence VFYIAAQCLGAIIGAGILYLV. The Extracellular segment spans residues 137–155; it reads TPPSVVGGLGVTMVHGNLT. Asn-153 carries N-linked (GlcNAc...) asparagine glycosylation. A helical transmembrane segment spans residues 156–176; it reads AGHGLLVELIITFQLVFTIFA. Topologically, residues 177–184 are cytoplasmic; sequence SCDSKRTD. At Ser-180 the chain carries Phosphoserine; by PKC. A helical transmembrane segment spans residues 185–205; sequence VTGSIALAIGFSVAIGHLFAI. Residue Asn-206 is glycosylated (N-linked (GlcNAc...) asparagine). Over 206–208 the chain is Extracellular; sequence NYT. An intramembrane region (discontinuously helical) is located at residues 209–222; that stretch reads GASMNPARSFGPAV. Residues 213–215 carry the NPA 2 motif; it reads NPA. The Extracellular portion of the chain corresponds to 223–231; the sequence is IMGNWENHW. The helical transmembrane segment at 232–252 threads the bilayer; it reads IYWVGPIIGAVLAGGLYEYVF. The Cytoplasmic portion of the chain corresponds to 253–323; that stretch reads CPDVEFKRRF…DQSGEVLSSV (71 aa). Phosphoserine occurs at positions 276 and 285. Thr-289 carries the post-translational modification Phosphothreonine. Phosphoserine is present on Ser-321.

This sequence belongs to the MIP/aquaporin (TC 1.A.8) family. In terms of assembly, homotetramer. The tetramers can form oligomeric arrays in membranes. The size of the oligomers differs between tissues and is smaller in skeletal muscle than in brain. Interaction between AQP4 oligomeric arrays in close-by cells can contribute to cell-cell adhesion. Part of a complex containing MLC1, TRPV4, HEPACAM and ATP1B1. Post-translationally, phosphorylation by PKC at Ser-180 reduces conductance by 50%. Phosphorylation by PKG at Ser-111 in response to glutamate increases conductance by 40%. Isoform 2: Palmitoylated on its N-terminal region. Isoform 1: Not palmitoylated. Detected in skeletal muscle. Detected in stomach, along the glandular base region of the fundic gland (at protein level). Detected in brain, lung and skeletal muscle, and at much lower levels in heart and ovary.

The protein localises to the cell membrane. It is found in the basolateral cell membrane. It localises to the endosome membrane. Its subcellular location is the sarcolemma. The protein resides in the cell projection. It catalyses the reaction H2O(in) = H2O(out). Functionally, forms a water-specific channel. Plays an important role in brain water homeostasis. It is involved in glymphatic solute transport and is required for a normal rate of water exchange across the blood brain interface. Required for normal levels of cerebrospinal fluid influx into the brain cortex and parenchyma along paravascular spaces that surround penetrating arteries, and for normal drainage of interstitial fluid along paravenous drainage pathways. Thereby, it is required for normal clearance of solutes from the brain interstitial fluid, including soluble beta-amyloid peptides derived from APP. Plays a redundant role in urinary water homeostasis and urinary concentrating ability. This Homo sapiens (Human) protein is Aquaporin-4 (AQP4).